The following is a 245-amino-acid chain: Enolase-phosphatase E1 (245 aa).

This sequence belongs to the HAD-like hydrolase superfamily. MasA/MtnC family. As to quaternary structure, monomer. Mg(2+) serves as cofactor.

It catalyses the reaction 5-methylsulfanyl-2,3-dioxopentyl phosphate + H2O = 1,2-dihydroxy-5-(methylsulfanyl)pent-1-en-3-one + phosphate. Its pathway is amino-acid biosynthesis; L-methionine biosynthesis via salvage pathway; L-methionine from S-methyl-5-thio-alpha-D-ribose 1-phosphate: step 3/6. It functions in the pathway amino-acid biosynthesis; L-methionine biosynthesis via salvage pathway; L-methionine from S-methyl-5-thio-alpha-D-ribose 1-phosphate: step 4/6. Functionally, bifunctional enzyme that catalyzes the enolization of 2,3-diketo-5-methylthiopentyl-1-phosphate (DK-MTP-1-P) into the intermediate 2-hydroxy-3-keto-5-methylthiopentenyl-1-phosphate (HK-MTPenyl-1-P), which is then dephosphorylated to form the acireductone 1,2-dihydroxy-3-keto-5-methylthiopentene (DHK-MTPene). The sequence is that of Enolase-phosphatase E1 from Synechococcus sp. (strain CC9902).